A 198-amino-acid polypeptide reads, in one-letter code: Nucleoside triphosphate pyrophosphatase 1 (198 aa).

Asp-75 acts as the Proton acceptor in catalysis.

It belongs to the Maf family. The cofactor is a divalent metal cation.

Its subcellular location is the cytoplasm. It carries out the reaction a ribonucleoside 5'-triphosphate + H2O = a ribonucleoside 5'-phosphate + diphosphate + H(+). It catalyses the reaction a 2'-deoxyribonucleoside 5'-triphosphate + H2O = a 2'-deoxyribonucleoside 5'-phosphate + diphosphate + H(+). Functionally, nucleoside triphosphate pyrophosphatase. May have a dual role in cell division arrest and in preventing the incorporation of modified nucleotides into cellular nucleic acids. The sequence is that of Nucleoside triphosphate pyrophosphatase 1 from Jannaschia sp. (strain CCS1).